The primary structure comprises 159 residues: Putative ribosomal RNA large subunit methyltransferase H (159 aa).

S-adenosyl-L-methionine is bound by residues L76, G108, and 127 to 132; that span reads FSKMTF.

This sequence belongs to the RNA methyltransferase RlmH family.

It is found in the cytoplasm. The enzyme catalyses pseudouridine(1915) in 23S rRNA + S-adenosyl-L-methionine = N(3)-methylpseudouridine(1915) in 23S rRNA + S-adenosyl-L-homocysteine + H(+). Specifically methylates the pseudouridine at position 1915 (m3Psi1915) in 23S rRNA. The protein is Putative ribosomal RNA large subunit methyltransferase H of Methanococcus maripaludis (strain DSM 14266 / JCM 13030 / NBRC 101832 / S2 / LL).